Here is a 355-residue protein sequence, read N- to C-terminus: Probable low-specificity L-threonine aldolase 2 (355 aa).

At K211 the chain carries N6-(pyridoxal phosphate)lysine.

The protein belongs to the threonine aldolase family. Pyridoxal 5'-phosphate serves as cofactor. Expressed in roots, leaf vasculature and flowers.

It catalyses the reaction L-threonine = acetaldehyde + glycine. The catalysed reaction is L-allo-threonine = acetaldehyde + glycine. The protein operates within amino-acid degradation; L-threonine degradation via aldolase pathway; acetaldehyde and glycine from L-threonine: step 1/1. Threonine aldolase involved in threonine degradation to glycine. May play a role in the removal of L-allo-threonine. The sequence is that of Probable low-specificity L-threonine aldolase 2 (THA2) from Arabidopsis thaliana (Mouse-ear cress).